We begin with the raw amino-acid sequence, 654 residues long: Mitochondrial-processing peptidase subunit alpha-1 (654 aa).

The disordered stretch occupies residues 73 to 94 (SSSSYKGNNNNNNKLSYTTSSN). Residues 381–446 (HKNHLKSQLQ…EQLELQQVKE (66 aa)) adopt a coiled-coil conformation.

Belongs to the peptidase M16 family. In terms of assembly, heterodimer of alpha and beta subunits, forming the mitochondrial processing protease (MPP) in which subunit alpha is involved in substrate recognition and binding and subunit beta is the catalytic subunit.

The protein resides in the mitochondrion matrix. Substrate recognition and binding subunit of the essential mitochondrial processing protease (MPP), which cleaves the mitochondrial sequence off newly imported precursors proteins. The chain is Mitochondrial-processing peptidase subunit alpha-1 (mppA1) from Dictyostelium discoideum (Social amoeba).